Here is a 122-residue protein sequence, read N- to C-terminus: MHKTSPHRNQRLADQIQRDLAELIPRELRSSSLGLITLQSIELTPDLAHAKVFFTVLGAEPEHALKALQEKAGYLYSLLFKRLHIHTVPTLHFHYDSSVEHGIEMSKLIDQAVESDQKDENK.

The protein belongs to the RbfA family. Monomer. Binds 30S ribosomal subunits, but not 50S ribosomal subunits or 70S ribosomes.

It is found in the cytoplasm. Functionally, one of several proteins that assist in the late maturation steps of the functional core of the 30S ribosomal subunit. Associates with free 30S ribosomal subunits (but not with 30S subunits that are part of 70S ribosomes or polysomes). Required for efficient processing of 16S rRNA. May interact with the 5'-terminal helix region of 16S rRNA. The protein is Ribosome-binding factor A of Polynucleobacter necessarius subsp. necessarius (strain STIR1).